The primary structure comprises 341 residues: ATP synthase subunit a 2 (341 aa).

An N-terminal signal peptide occupies residues 1–33 (MKRVKVIQIKGFFRVMALLAPLLLNAYLPVQAS). 6 helical membrane passes run 112 to 132 (VVML…VGAA), 173 to 193 (LPYL…GLIP), 195 to 215 (GATA…TFFI), 242 to 262 (WIIM…ALTV), 273 to 293 (IVIL…VAAA), and 307 to 327 (IFVA…FIGL).

The protein belongs to the ATPase A chain family. As to quaternary structure, F-type ATPases have 2 components, CF(1) - the catalytic core - and CF(0) - the membrane proton channel. CF(1) has five subunits: alpha(3), beta(3), gamma(1), delta(1), epsilon(1). CF(0) has four main subunits: a, b, b' and c.

The protein localises to the cell inner membrane. Key component of the proton channel; it plays a direct role in the translocation of protons across the membrane. The protein is ATP synthase subunit a 2 of Chlorobium luteolum (strain DSM 273 / BCRC 81028 / 2530) (Pelodictyon luteolum).